The chain runs to 123 residues: Large ribosomal subunit protein uL22 (123 aa).

The protein belongs to the universal ribosomal protein uL22 family. Part of the 50S ribosomal subunit.

Functionally, this protein binds specifically to 23S rRNA; its binding is stimulated by other ribosomal proteins, e.g. L4, L17, and L20. It is important during the early stages of 50S assembly. It makes multiple contacts with different domains of the 23S rRNA in the assembled 50S subunit and ribosome. In terms of biological role, the globular domain of the protein is located near the polypeptide exit tunnel on the outside of the subunit, while an extended beta-hairpin is found that lines the wall of the exit tunnel in the center of the 70S ribosome. In Synechococcus sp. (strain JA-3-3Ab) (Cyanobacteria bacterium Yellowstone A-Prime), this protein is Large ribosomal subunit protein uL22.